Consider the following 109-residue polypeptide: Large ribosomal subunit protein uL24 (109 aa).

It belongs to the universal ribosomal protein uL24 family. Part of the 50S ribosomal subunit.

In terms of biological role, one of two assembly initiator proteins, it binds directly to the 5'-end of the 23S rRNA, where it nucleates assembly of the 50S subunit. One of the proteins that surrounds the polypeptide exit tunnel on the outside of the subunit. This Ehrlichia canis (strain Jake) protein is Large ribosomal subunit protein uL24.